The primary structure comprises 1461 residues: Formin-3 (1461 aa).

Disordered stretches follow at residues 1 to 67 and 431 to 457; these read MASK…SDDN and YREE…RPTT. Over residues 12-28 the composition is skewed to low complexity; it reads TSRSIQSRNSSYSTSSN. Polar residues-rich tracts occupy residues 29 to 53 and 438 to 457; these read ERIG…STND and PHGN…RPTT. Residues 92 to 508 form the GBD/FH3 domain; it reads SETEQLRKIY…KIQKSMQLLT (417 aa). The tract at residues 137 to 515 is interaction with tea4; the sequence is QHTVLDEATY…LLTHTLEALE (379 aa). The stretch at 540–639 forms a coiled coil; that stretch reads GTAEEIAEYK…VQNSNEQHLQ (100 aa). The segment at 683–811 is disordered; the sequence is GIPVRVHTPS…EPKIDETSLT (129 aa). The span at 700 to 718 shows a compositional bias: low complexity; that stretch reads SFSGSEISSSPSPLLPDVS. The span at 731–784 shows a compositional bias: pro residues; it reads SPPPPPPAVIVPTPAPAPIPVPPPAPIMGGPPPPPPPPGVAGAGPPPPPPPPPA. Residues 801-811 show a composition bias toward basic and acidic residues; it reads PEPKIDETSLT. The FH2 domain occupies 845–1257; it reads LRDLHKPTRP…RIMSEDRDKL (413 aa). 2 disordered regions span residues 1268 to 1337 and 1416 to 1461; these read AKYR…AEEK and ERLQ…RQKQ. Composition is skewed to basic and acidic residues over residues 1273-1315 and 1325-1337; these read KREL…KTGD and MEDL…AEEK. Over residues 1445–1454 the composition is skewed to polar residues; the sequence is TNGSNASNLV.

It belongs to the formin homology family. Interacts with rax2, rho3 and tea4. Interacts with tea1 in the presence of tea4.

Its subcellular location is the cytoplasm. The protein localises to the cell cortex. It localises to the cell tip. In terms of biological role, involved in controlling polarized cell growth. Required for interphase actin cable formation and microtubule organization. The protein is Formin-3 (for3) of Schizosaccharomyces pombe (strain 972 / ATCC 24843) (Fission yeast).